Reading from the N-terminus, the 347-residue chain is MSPYVLTIMSLSLLLGTTMTLISDHWLTAWMGLEINTLAVIPLMTKPHHSRSTESAIKYFMIQATASMIILFSAIFNASTTNQWITGQISNTSASFMMTIALAMKLGLAPFHFWVPEVTQGIPLLSGMILLTWQKIAPISIFYQISPSLNMSLLMILSITSTLLGGWGGLNQTQLRKILAYSSIAHMGWMTIIIMIYPSLTILNLILYLASTITMFMVLNQSSSTKINSLSILWNKSAPNMIIITLTLLSLGGLPPLTGFMPKWLILQELINFNNIPLAMMLALSTLLNLFFYMRIIYSSTLTMFPSINNTKLQWALYSHKTILPIPTLTIISSLLLPMTPMFITLS.

A run of 11 helical transmembrane segments spans residues 2–22, 25–45, 56–76, 96–116, 122–142, 149–169, 178–197, 202–219, 241–261, 278–298, and 323–343; these read SPYV…MTLI, HWLT…PLMT, AIKY…SAIF, FMMT…FWVP, IPLL…ISIF, LNMS…GWGG, ILAY…IMIY, ILNL…FMVL, MIII…TGFM, LAMM…RIIY, and ILPI…TPMF.

It belongs to the complex I subunit 2 family. Core subunit of respiratory chain NADH dehydrogenase (Complex I) which is composed of 45 different subunits. Interacts with TMEM242.

Its subcellular location is the mitochondrion inner membrane. The enzyme catalyses a ubiquinone + NADH + 5 H(+)(in) = a ubiquinol + NAD(+) + 4 H(+)(out). Functionally, core subunit of the mitochondrial membrane respiratory chain NADH dehydrogenase (Complex I) which catalyzes electron transfer from NADH through the respiratory chain, using ubiquinone as an electron acceptor. Essential for the catalytic activity and assembly of complex I. The polypeptide is NADH-ubiquinone oxidoreductase chain 2 (Metachirus nudicaudatus (Brown four-eyed opossum)).